We begin with the raw amino-acid sequence, 29 residues long: Dermaseptin-J5 (29 aa).

Val-29 carries the post-translational modification Valine amide.

In terms of tissue distribution, expressed by the skin glands.

The protein resides in the secreted. In terms of biological role, has antimicrobial activity. This chain is Dermaseptin-J5, found in Phasmahyla jandaia (Jandaia leaf frog).